Consider the following 184-residue polypeptide: Holliday junction branch migration complex subunit RuvA (184 aa).

The tract at residues 1–62 (MIVGLVGEVL…EDSESLYGFV (62 aa)) is domain I. The domain II stretch occupies residues 63–134 (DINEKKMFDR…ELGEFDISES (72 aa)). A flexible linker region spans residues 134 to 135 (SN). A domain III region spans residues 136–184 (VTSSAFQEASMALQSLGFKKEQIQKALQECTATDTASLVKEALKKIQKL).

The protein belongs to the RuvA family. Homotetramer. Forms an RuvA(8)-RuvB(12)-Holliday junction (HJ) complex. HJ DNA is sandwiched between 2 RuvA tetramers; dsDNA enters through RuvA and exits via RuvB. An RuvB hexamer assembles on each DNA strand where it exits the tetramer. Each RuvB hexamer is contacted by two RuvA subunits (via domain III) on 2 adjacent RuvB subunits; this complex drives branch migration. In the full resolvosome a probable DNA-RuvA(4)-RuvB(12)-RuvC(2) complex forms which resolves the HJ.

The protein resides in the cytoplasm. The RuvA-RuvB-RuvC complex processes Holliday junction (HJ) DNA during genetic recombination and DNA repair, while the RuvA-RuvB complex plays an important role in the rescue of blocked DNA replication forks via replication fork reversal (RFR). RuvA specifically binds to HJ cruciform DNA, conferring on it an open structure. The RuvB hexamer acts as an ATP-dependent pump, pulling dsDNA into and through the RuvAB complex. HJ branch migration allows RuvC to scan DNA until it finds its consensus sequence, where it cleaves and resolves the cruciform DNA. This Nitratiruptor sp. (strain SB155-2) protein is Holliday junction branch migration complex subunit RuvA.